Consider the following 3993-residue polypeptide: Intermembrane lipid transfer protein VPS13B (3993 aa).

The Chorein N-terminal domain maps to 2-102 (LESYVTPILM…KDGIQDDHES (101 aa)). The disordered stretch occupies residues 100 to 133 (HESCGSNSTNRSTAENTKSSIKPRRIQQAAPADP). Positions 103 to 119 (CGSNSTNRSTAENTKSS) are enriched in polar residues. 4 positions are modified to phosphoserine: S413, S998, S1001, and S1032. Disordered stretches follow at residues 1262-1303 (SPVW…PFSD), 1616-1637 (DQLK…ERNS), and 1735-1770 (TKAT…DSGI). The span at 1264–1291 (VWSSVGTAPPDTSTCSPSADIGTTTEGD) shows a compositional bias: polar residues. Basic and acidic residues predominate over residues 1739–1750 (EISKQEQKKVDT). Residues 1756–1770 (AETSSRYSGAQDSGI) are compositionally biased toward polar residues. S1789 carries the phosphoserine modification. Residues 2048 to 2067 (HSSAHSKETSTPSDSILNMD) are disordered. The SHR-BD domain occupies 2604–2683 (HFVICNDTQE…TIQYKGRTAS (80 aa)). Residues 3880–3993 (AFPITEISCA…KNKALRKGFS (114 aa)) form a localizes the protein to the Golgi apparatus region.

Belongs to the VPS13 family. In terms of assembly, interacts with STX6. Interacts with STX12 (via N-terminus). Interacts with RAB6A isoform 1 (GTP-bound) and isoform 2 (GTP-bound). Interacts with RAB6B (GTP-bound). In terms of tissue distribution, ubiquitously expressed in all examined tissues.

Its subcellular location is the recycling endosome membrane. The protein localises to the cytoplasmic vesicle. It localises to the secretory vesicle. The protein resides in the acrosome membrane. It is found in the golgi apparatus. Its subcellular location is the cis-Golgi network membrane. The protein localises to the endoplasmic reticulum-Golgi intermediate compartment membrane. It localises to the trans-Golgi network membrane. The protein resides in the early endosome membrane. It is found in the lysosome membrane. In terms of biological role, mediates the transfer of lipids between membranes at organelle contact sites. Binds phosphatidylinositol 3-phosphate. Functions as a tethering factor in the slow endocytic recycling pathway, to assist traffic between early and recycling endosomes. Involved in the transport of proacrosomal vesicles to the nuclear dense lamina (NDL) during spermatid development. Plays a role in the assembly of the Golgi apparatus, possibly by mediating trafficking to the Golgi membrane. Plays a role in the development of the nervous system, and may be required for neuron projection development. May also play a role during adipose tissue development. Required for maintenance of the ocular lens. Required for proper organization of the Golgi. The polypeptide is Intermembrane lipid transfer protein VPS13B (Mus musculus (Mouse)).